A 453-amino-acid polypeptide reads, in one-letter code: Putative long chain fatty acid-CoA ligase VraA (453 aa).

Belongs to the ATP-dependent AMP-binding enzyme family.

The chain is Putative long chain fatty acid-CoA ligase VraA (vraA) from Staphylococcus epidermidis (strain ATCC 35984 / DSM 28319 / BCRC 17069 / CCUG 31568 / BM 3577 / RP62A).